The chain runs to 1603 residues: Vitellogenin-5 (1603 aa).

Residues 1 to 15 form the signal peptide; sequence MKSIIIASLVALAIA. In terms of domain architecture, Vitellogenin spans 24 to 685; the sequence is FSPKSEYVYK…EKNAFLPKEV (662 aa). Residues 1306–1475 form the VWFD domain; sequence ATCKVDQSEV…SYLLKNEECE (170 aa). 2 disulfides stabilise this stretch: Cys-1308–Cys-1438 and Cys-1330–Cys-1474. Positions 1492-1513 are disordered; sequence NREEKKSDYESSSDYESNYDEK.

In terms of processing, vitellogenin 5 undergoes little if any processing before being packaged into yolk platelets. In terms of tissue distribution, expressed in the intestine of adult hermaphrodites.

It localises to the secreted. In terms of biological role, precursor of the egg-yolk proteins that are sources of nutrients during embryonic development. Together with other vitellogenins, may play a role in modulating life-span, acting via induction of autophagy and lysosomal lipolysis. The protein is Vitellogenin-5 (vit-5) of Caenorhabditis elegans.